The primary structure comprises 388 residues: GTPase Obg (388 aa).

Residues 1–159 (MKFVDEAVIR…RSLKLELLLL (159 aa)) enclose the Obg domain. In terms of domain architecture, OBG-type G spans 160 to 333 (ADVGLLGMPN…LALKLLDYIA (174 aa)). GTP-binding positions include 166–173 (GMPNAGKS), 191–195 (FTTLV), 213–216 (DIPG), 283–286 (NKTD), and 314–316 (SAY). Mg(2+)-binding residues include S173 and T193.

The protein belongs to the TRAFAC class OBG-HflX-like GTPase superfamily. OBG GTPase family. In terms of assembly, monomer. The cofactor is Mg(2+).

The protein resides in the cytoplasm. An essential GTPase which binds GTP, GDP and possibly (p)ppGpp with moderate affinity, with high nucleotide exchange rates and a fairly low GTP hydrolysis rate. Plays a role in control of the cell cycle, stress response, ribosome biogenesis and in those bacteria that undergo differentiation, in morphogenesis control. The chain is GTPase Obg from Shewanella putrefaciens (strain CN-32 / ATCC BAA-453).